The following is a 381-amino-acid chain: Dual-specificity RNA methyltransferase RlmN (381 aa).

Glu96 serves as the catalytic Proton acceptor. The Radical SAM core domain occupies 102 to 342; sequence TDDRGTLCVS…TRTTRGDDID (241 aa). A disulfide bridge connects residues Cys109 and Cys345. [4Fe-4S] cluster contacts are provided by Cys116, Cys120, and Cys123. S-adenosyl-L-methionine contacts are provided by residues 170–171, Ser202, 224–226, and Asn302; these read GE and SLH. Cys345 serves as the catalytic S-methylcysteine intermediate.

Belongs to the radical SAM superfamily. RlmN family. The cofactor is [4Fe-4S] cluster.

Its subcellular location is the cytoplasm. The catalysed reaction is adenosine(2503) in 23S rRNA + 2 reduced [2Fe-2S]-[ferredoxin] + 2 S-adenosyl-L-methionine = 2-methyladenosine(2503) in 23S rRNA + 5'-deoxyadenosine + L-methionine + 2 oxidized [2Fe-2S]-[ferredoxin] + S-adenosyl-L-homocysteine. It catalyses the reaction adenosine(37) in tRNA + 2 reduced [2Fe-2S]-[ferredoxin] + 2 S-adenosyl-L-methionine = 2-methyladenosine(37) in tRNA + 5'-deoxyadenosine + L-methionine + 2 oxidized [2Fe-2S]-[ferredoxin] + S-adenosyl-L-homocysteine. Functionally, specifically methylates position 2 of adenine 2503 in 23S rRNA and position 2 of adenine 37 in tRNAs. m2A2503 modification seems to play a crucial role in the proofreading step occurring at the peptidyl transferase center and thus would serve to optimize ribosomal fidelity. This is Dual-specificity RNA methyltransferase RlmN from Pseudomonas putida (strain W619).